Here is a 780-residue protein sequence, read N- to C-terminus: E3 UFM1-protein ligase 1 homolog (780 aa).

Polar residues predominate over residues serine 403–threonine 413. 2 disordered regions span residues serine 403–isoleucine 458 and serine 734–leucine 760. Basic and acidic residues-rich tracts occupy residues lysine 443 to isoleucine 458 and aspartate 736 to aspartate 750.

Belongs to the UFL1 family.

Functionally, E3 UFM1-protein ligase that mediates ufmylation of target proteins. In Trichoplax adhaerens (Trichoplax reptans), this protein is E3 UFM1-protein ligase 1 homolog.